The sequence spans 713 residues: Elongation factor G (713 aa).

Positions 8–290 (ERYRNFGIMA…GVIQLLPSPV (283 aa)) constitute a tr-type G domain. GTP contacts are provided by residues 17-24 (AHIDAGKT), 88-92 (DTPGH), and 142-145 (NKMD).

It belongs to the TRAFAC class translation factor GTPase superfamily. Classic translation factor GTPase family. EF-G/EF-2 subfamily.

It is found in the cytoplasm. Functionally, catalyzes the GTP-dependent ribosomal translocation step during translation elongation. During this step, the ribosome changes from the pre-translocational (PRE) to the post-translocational (POST) state as the newly formed A-site-bound peptidyl-tRNA and P-site-bound deacylated tRNA move to the P and E sites, respectively. Catalyzes the coordinated movement of the two tRNA molecules, the mRNA and conformational changes in the ribosome. This is Elongation factor G from Stenotrophomonas maltophilia (strain K279a).